A 354-amino-acid polypeptide reads, in one-letter code: Uroporphyrinogen decarboxylase (354 aa).

Substrate contacts are provided by residues 27 to 31 (RQAGR), D77, Y154, S209, and H327.

The protein belongs to the uroporphyrinogen decarboxylase family. Homodimer.

It localises to the cytoplasm. The enzyme catalyses uroporphyrinogen III + 4 H(+) = coproporphyrinogen III + 4 CO2. Its pathway is porphyrin-containing compound metabolism; protoporphyrin-IX biosynthesis; coproporphyrinogen-III from 5-aminolevulinate: step 4/4. Functionally, catalyzes the decarboxylation of four acetate groups of uroporphyrinogen-III to yield coproporphyrinogen-III. The polypeptide is Uroporphyrinogen decarboxylase (Shewanella denitrificans (strain OS217 / ATCC BAA-1090 / DSM 15013)).